The sequence spans 334 residues: tRNA-dihydrouridine(20/20a) synthase (334 aa).

FMN-binding positions include 18-20 and Gln71; that span reads PMM. Cys101 (proton donor) is an active-site residue. Residues Lys140, His172, 212–214, and 234–235 contribute to the FMN site; these read NGG and GR.

Belongs to the Dus family. DusA subfamily. FMN serves as cofactor.

It catalyses the reaction 5,6-dihydrouridine(20) in tRNA + NADP(+) = uridine(20) in tRNA + NADPH + H(+). The catalysed reaction is 5,6-dihydrouridine(20) in tRNA + NAD(+) = uridine(20) in tRNA + NADH + H(+). The enzyme catalyses 5,6-dihydrouridine(20a) in tRNA + NADP(+) = uridine(20a) in tRNA + NADPH + H(+). It carries out the reaction 5,6-dihydrouridine(20a) in tRNA + NAD(+) = uridine(20a) in tRNA + NADH + H(+). Functionally, catalyzes the synthesis of 5,6-dihydrouridine (D), a modified base found in the D-loop of most tRNAs, via the reduction of the C5-C6 double bond in target uridines. Specifically modifies U20 and U20a in tRNAs. This Xanthomonas axonopodis pv. citri (strain 306) protein is tRNA-dihydrouridine(20/20a) synthase.